Here is a 152-residue protein sequence, read N- to C-terminus: Cytosolic calcium-binding protein 1 (152 aa).

7 tandem repeats follow at residues 57-62, 67-71, 78-82, 104-108, 112-116, 124-129, and 131-136. The 7 X 5 AA approximate repeats of V-E-E-K-K stretch occupies residues 57-136; it reads VEETEKPIEE…EKKPEAEEEK (80 aa). Positions 60 to 152 are disordered; the sequence is TEKPIEETEE…VTAPVEKADE (93 aa). Positions 96–138 are enriched in basic and acidic residues; that stretch reads DESKTEEVVEAKKEEEVEEKKTEEAPVVVEEEKKPEAEEEKPA.

Predominantly expressed in petioles (at protein level). Mainly observed in shoots, flowers, siliques and roots, and, to a lower extent, in stems and leaves.

It is found in the cytoplasm. It localises to the cytosol. Binds calcium Ca(2+) and may act as a signal mediator to buffer Ca(2+). This Arabidopsis thaliana (Mouse-ear cress) protein is Cytosolic calcium-binding protein 1.